The sequence spans 67 residues: Mu-conotoxin TsIIIA (67 aa).

An N-terminal signal peptide occupies residues 1 to 20; that stretch reads MMSKLGVLLTICLLLFPLTA. Positions 21–48 are excised as a propeptide; sequence VPLDGDQPADQPAERKQNEQHPLFDQKR. Disulfide bonds link Cys50-Cys59, Cys51-Cys64, and Cys55-Cys65.

This sequence belongs to the conotoxin M superfamily. Expressed by the venom duct.

It is found in the secreted. Mu-conotoxins block voltage-gated sodium channels (Nav). This toxin specifically inhibits mammalian Nav1.8/SCN10A sodium currents (IC(50)=2.11 uM) without inducing a shift in the current-voltage relationship of this channel. In vivo, shows potent analgesic activity in a mice hotplate analgesic assay. In addition, this toxin has better analgesic effects than Ziconotide, an analgesic drug. This is Mu-conotoxin TsIIIA from Conus tessulatus (Tessellate cone).